We begin with the raw amino-acid sequence, 520 residues long: Cholesterol side-chain cleavage enzyme, mitochondrial (520 aa).

A mitochondrion-targeting transit peptide spans M1–G39. Position 461 (C461) interacts with heme.

This sequence belongs to the cytochrome P450 family. Interacts with FDX1/adrenodoxin. Heme serves as cofactor. As to expression, detected in adrenal cortex and corpus luteum (at protein level).

It localises to the mitochondrion inner membrane. The enzyme catalyses 6 reduced [adrenodoxin] + cholesterol + 3 O2 + 6 H(+) = 4-methylpentanal + pregnenolone + 6 oxidized [adrenodoxin] + 4 H2O. It carries out the reaction 2 reduced [adrenodoxin] + cholesterol + O2 + 2 H(+) = (22R)-hydroxycholesterol + 2 oxidized [adrenodoxin] + H2O. It catalyses the reaction (22R)-hydroxycholesterol + 2 reduced [adrenodoxin] + O2 + 2 H(+) = (20R,22R)-20,22-dihydroxycholesterol + 2 oxidized [adrenodoxin] + H2O. The catalysed reaction is (20R,22R)-20,22-dihydroxycholesterol + 2 reduced [adrenodoxin] + O2 + 2 H(+) = 4-methylpentanal + pregnenolone + 2 oxidized [adrenodoxin] + 2 H2O. It functions in the pathway lipid metabolism; C21-steroid hormone metabolism. The protein operates within steroid metabolism; cholesterol metabolism. Functionally, a cytochrome P450 monooxygenase that catalyzes the side-chain hydroxylation and cleavage of cholesterol to pregnenolone, the precursor of most steroid hormones. Catalyzes three sequential oxidation reactions of cholesterol, namely the hydroxylation at C22 followed with the hydroxylation at C20 to yield 20R,22R-hydroxycholesterol that is further cleaved between C20 and C22 to yield the C21-steroid pregnenolone and 4-methylpentanal. Mechanistically, uses molecular oxygen inserting one oxygen atom into a substrate and reducing the second into a water molecule. Two electrons are provided by NADPH via a two-protein mitochondrial transfer system comprising flavoprotein FDXR (adrenodoxin/ferredoxin reductase) and nonheme iron-sulfur protein FDX1 or FDX2 (adrenodoxin/ferredoxin). The protein is Cholesterol side-chain cleavage enzyme, mitochondrial (CYP11A1) of Bos taurus (Bovine).